A 159-amino-acid polypeptide reads, in one-letter code: Ribosomal RNA large subunit methyltransferase H (159 aa).

S-adenosyl-L-methionine is bound by residues leucine 76, glycine 108, and 127–132 (FSKMTL).

Belongs to the RNA methyltransferase RlmH family. As to quaternary structure, homodimer.

Its subcellular location is the cytoplasm. The enzyme catalyses pseudouridine(1915) in 23S rRNA + S-adenosyl-L-methionine = N(3)-methylpseudouridine(1915) in 23S rRNA + S-adenosyl-L-homocysteine + H(+). In terms of biological role, specifically methylates the pseudouridine at position 1915 (m3Psi1915) in 23S rRNA. In Bacillus cereus (strain ATCC 10987 / NRS 248), this protein is Ribosomal RNA large subunit methyltransferase H.